Consider the following 309-residue polypeptide: NADH-quinone oxidoreductase subunit C (309 aa).

The disordered stretch occupies residues 198 to 309; it reads LPGDEKAVPP…RTRKKKEDGE (112 aa). Residues 220–230 show a composition bias toward basic and acidic residues; sequence TKGDAKADVPK. The span at 246–261 shows a compositional bias: low complexity; it reads DAAAKPVAEAAAPAAT.

It belongs to the complex I 30 kDa subunit family. As to quaternary structure, NDH-1 is composed of 14 different subunits. Subunits NuoB, C, D, E, F, and G constitute the peripheral sector of the complex.

The protein localises to the cell inner membrane. It carries out the reaction a quinone + NADH + 5 H(+)(in) = a quinol + NAD(+) + 4 H(+)(out). Its function is as follows. NDH-1 shuttles electrons from NADH, via FMN and iron-sulfur (Fe-S) centers, to quinones in the respiratory chain. The immediate electron acceptor for the enzyme in this species is believed to be ubiquinone. Couples the redox reaction to proton translocation (for every two electrons transferred, four hydrogen ions are translocated across the cytoplasmic membrane), and thus conserves the redox energy in a proton gradient. This is NADH-quinone oxidoreductase subunit C from Novosphingobium aromaticivorans (strain ATCC 700278 / DSM 12444 / CCUG 56034 / CIP 105152 / NBRC 16084 / F199).